Reading from the N-terminus, the 293-residue chain is Protease HtpX homolog (293 aa).

2 consecutive transmembrane segments (helical) span residues 4–24 (IFLF…TMRI) and 38–58 (LTGL…ISLL). Histidine 146 contributes to the Zn(2+) binding site. Residue glutamate 147 is part of the active site. Histidine 150 is a Zn(2+) binding site. Transmembrane regions (helical) follow at residues 161–181 (LIQG…GYFV) and 198–218 (ATVI…VAWF). Residue glutamate 223 participates in Zn(2+) binding.

The protein belongs to the peptidase M48B family. Requires Zn(2+) as cofactor.

The protein localises to the cell inner membrane. The sequence is that of Protease HtpX homolog from Bordetella parapertussis (strain 12822 / ATCC BAA-587 / NCTC 13253).